Reading from the N-terminus, the 286-residue chain is Small ribosomal subunit protein uS2 (286 aa).

The segment at 231–286 (ERAQAEAKAAAGDNDAPVSSEGESTEVASDAASTASETTATSSDESAAESSEAESK) is disordered. Residues 255–280 (TEVASDAASTASETTATSSDESAAES) show a composition bias toward low complexity.

It belongs to the universal ribosomal protein uS2 family.

The chain is Small ribosomal subunit protein uS2 from Corynebacterium kroppenstedtii (strain DSM 44385 / JCM 11950 / CIP 105744 / CCUG 35717).